We begin with the raw amino-acid sequence, 346 residues long: Thioredoxin domain-containing protein R362 (346 aa).

In terms of domain architecture, Thioredoxin spans 212–345 (LTNLSNTEAN…IVKFIDETMS (134 aa)).

The protein resides in the virion. The sequence is that of Thioredoxin domain-containing protein R362 from Acanthamoeba polyphaga (Amoeba).